The following is a 484-amino-acid chain: Chromosomal replication initiator protein DnaA (484 aa).

The segment at 1 to 73 is domain I, interacts with DnaA modulators; the sequence is MQEGKNIWSL…EILTEKGHNT (73 aa). A domain II region spans residues 73–140; sequence TINVEFINPP…EDIHTKYRNP (68 aa). The segment at 141 to 357 is domain III, AAA+ region; it reads FLKKKYTFEN…AAVTKLKAHI (217 aa). Residues glycine 185, glycine 187, lysine 188, and threonine 189 each contribute to the ATP site. A domain IV, binds dsDNA region spans residues 358–484; it reads DLEDIEIDTS…IELMNKINKN (127 aa).

This sequence belongs to the DnaA family. In terms of assembly, oligomerizes as a right-handed, spiral filament on DNA at oriC.

The protein resides in the cytoplasm. In terms of biological role, plays an essential role in the initiation and regulation of chromosomal replication. ATP-DnaA binds to the origin of replication (oriC) to initiate formation of the DNA replication initiation complex once per cell cycle. Binds the DnaA box (a 9 base pair repeat at the origin) and separates the double-stranded (ds)DNA. Forms a right-handed helical filament on oriC DNA; dsDNA binds to the exterior of the filament while single-stranded (ss)DNA is stabiized in the filament's interior. The ATP-DnaA-oriC complex binds and stabilizes one strand of the AT-rich DNA unwinding element (DUE), permitting loading of DNA polymerase. After initiation quickly degrades to an ADP-DnaA complex that is not apt for DNA replication. Binds acidic phospholipids. This Borrelia turicatae (strain 91E135) protein is Chromosomal replication initiator protein DnaA.